A 321-amino-acid polypeptide reads, in one-letter code: Basic endochitinase A (321 aa).

An N-terminal signal peptide occupies residues 1-19; that stretch reads MGAFALFAVLAMAVTMAVA. The Chitin-binding type-1 domain occupies 20–60; that stretch reads EQCGSQAGGATCPNCLCCSRFGWCGSTSDYCGDGCQSQCAG. 5 disulfides stabilise this stretch: Cys22–Cys37, Cys31–Cys43, Cys34–Cys61, Cys36–Cys50, and Cys54–Cys58. The tract at residues 62–79 is hinge region (Gly/Pro/Thr-rich); it reads GGGGTPVTPTPTPSGGGG. Residues 80–321 form a catalytic region; sequence VSSIVSRALF…LDCYNQRPFA (242 aa). Disulfide bonds link Cys101–Cys163, Cys175–Cys183, and Cys301–Cys314. Catalysis depends on Glu145, which acts as the Proton donor.

The protein belongs to the glycosyl hydrolase 19 family. Chitinase class I subfamily. As to expression, localized in the aleurone cells of the seed endosperm (at protein level).

The catalysed reaction is Random endo-hydrolysis of N-acetyl-beta-D-glucosaminide (1-&gt;4)-beta-linkages in chitin and chitodextrins.. Defense against chitin-containing fungal pathogens. Binds the hyphal tips, lateral walls and septa of fungi and degrades mature chitin. The sequence is that of Basic endochitinase A from Secale cereale (Rye).